Here is a 159-residue protein sequence, read N- to C-terminus: Ribosome maturation factor RimP (159 aa).

It belongs to the RimP family.

It is found in the cytoplasm. Its function is as follows. Required for maturation of 30S ribosomal subunits. The protein is Ribosome maturation factor RimP of Bordetella avium (strain 197N).